Reading from the N-terminus, the 679-residue chain is Glycine--tRNA ligase beta subunit (679 aa).

This sequence belongs to the class-II aminoacyl-tRNA synthetase family. As to quaternary structure, tetramer of two alpha and two beta subunits.

It localises to the cytoplasm. The enzyme catalyses tRNA(Gly) + glycine + ATP = glycyl-tRNA(Gly) + AMP + diphosphate. The polypeptide is Glycine--tRNA ligase beta subunit (Thermodesulfovibrio yellowstonii (strain ATCC 51303 / DSM 11347 / YP87)).